A 1132-amino-acid polypeptide reads, in one-letter code: NUT family member 1 (1132 aa).

Disordered regions lie at residues 1-56 (MASD…SVFS), 337-365 (AASKTRAPRRRQRKAQRPPAPEAPKEIPP), 383-405 (LATGESDGKQEEEGQQQEEEGMY), 476-584 (EEED…VERR), 693-714 (RGTPMAQSYDQNPSPRAAGERD), 873-892 (DASSLPEASQEAGSRGNSFS), and 922-1017 (PLNV…DEEL). Residues 21-36 (APSPSPALPFLPPTSD) are compositionally biased toward pro residues. The segment covering 337–352 (AASKTRAPRRRQRKAQ) has biased composition (basic residues). Acidic residues predominate over residues 395 to 404 (EGQQQEEEGM). Polar residues-rich tracts occupy residues 487–497 (SGAQLDSSPSG), 697–706 (MAQSYDQNPS), and 883–892 (EAGSRGNSFS). Over residues 932–942 (GEGRVDPDLSK) the composition is skewed to basic and acidic residues. Residues 950–971 (QESQESYTTGTPKATSSHQGLG) are compositionally biased toward polar residues. Residues Ser-1026, Ser-1029, and Ser-1031 each carry the phosphoserine modification. The tract at residues 1031–1132 (SPREHPLSPH…GRRKKRRRSQ (102 aa)) is disordered. N5-methylglutamine is present on Gln-1046. The segment covering 1123 to 1132 (GRRKKRRRSQ) has biased composition (basic residues).

It belongs to the NUT family. Methylated at Gln-1046 by N6AMT1. In terms of processing, phosphorylation on Ser-1026, Ser-1029 or Ser-1031 is important for cytoplasmic export. In terms of tissue distribution, specifically expressed in testis.

It localises to the cytoplasm. Its subcellular location is the nucleus. Functionally, plays a role in the regulation of proliferation. Regulates TERT expression by modulating SP1 binding to TERT promoter binding sites. This Homo sapiens (Human) protein is NUT family member 1.